Reading from the N-terminus, the 721-residue chain is Dipeptidyl-peptidase 5 (721 aa).

Positions 1 to 18 (MGAFRWLSIAAAASTALA) are cleaved as a signal peptide. N-linked (GlcNAc...) asparagine glycosylation is found at asparagine 75, asparagine 94, asparagine 151, and asparagine 254. The interval 271-297 (ARPINGPDSPGTPKGIKGDSSSPVFSP) is disordered. N-linked (GlcNAc...) asparagine glycosylation is found at asparagine 380 and asparagine 450. Serine 560 acts as the Charge relay system in catalysis. Asparagine 607 is a glycosylation site (N-linked (GlcNAc...) asparagine). Catalysis depends on charge relay system residues aspartate 643 and histidine 675.

This sequence belongs to the peptidase S9C family. In terms of processing, N-glycosylated. Expressed in mycelia and conidia.

The protein localises to the secreted. May be involved in metabolism of dipeptides or may affect host defense mechanisms. Has a substrate specificity limited to the hydrolysis of X-Ala, His-Ser, and Ser-Tyr dipeptides at a neutral pH optimum. In Aspergillus fumigatus (strain CBS 144.89 / FGSC A1163 / CEA10) (Neosartorya fumigata), this protein is Dipeptidyl-peptidase 5.